The sequence spans 273 residues: Kit ligand (273 aa).

A signal peptide spans 1 to 25 (MKKTQTWIITCIYLQLLLFNPLVKT). Gln-26 is modified (pyrrolidone carboxylic acid). Residues 26–214 (QEICRNPVTD…AKSPEDPGLQ (189 aa)) lie on the Extracellular side of the membrane. 2 disulfides stabilise this stretch: Cys-29–Cys-114 and Cys-68–Cys-163. Residue Asn-90 is glycosylated (N-linked (GlcNAc...) asparagine; partial). N-linked (GlcNAc...) asparagine glycosylation occurs at Asn-145. An O-linked (GalNAc...) serine glycan is attached at Ser-167. O-linked (GalNAc...) threonine glycosylation is found at Thr-168 and Thr-180. Residues 190–211 (ASSLRNDSSSSNRKAAKSPEDP) form a disordered region. Positions 191–202 (SSLRNDSSSSNR) are enriched in low complexity. Asn-195 is a glycosylation site (N-linked (GlcNAc...) asparagine). The helical transmembrane segment at 215–237 (WTAMALPALISLVIGFAFGALYW) threads the bilayer. Topologically, residues 238-273 (KKKQSSLTRAVENIQINEEDNEISMLQQKEREFQEV) are cytoplasmic.

It belongs to the SCF family. In terms of assembly, homodimer, non-covalently linked. Heterotetramer with KIT, binding two KIT molecules; thereby mediates KIT dimerization and subsequent activation by autophosphorylation. A soluble form is produced by proteolytic processing of isoform 1 in the extracellular domain. Post-translationally, the identity of N- and O-linked saccharides is not reported in PubMed:1708771. The O-linked polysaccharides are probably the mucin type linked to GalNAc.

It localises to the cell membrane. Its subcellular location is the cytoplasm. It is found in the cytoskeleton. The protein resides in the cell projection. The protein localises to the lamellipodium. It localises to the filopodium. Its subcellular location is the secreted. In terms of biological role, ligand for the receptor-type protein-tyrosine kinase KIT. Plays an essential role in the regulation of cell survival and proliferation, hematopoiesis, stem cell maintenance, gametogenesis, mast cell development, migration and function, and in melanogenesis. KITLG/SCF binding can activate several signaling pathways. Promotes phosphorylation of PIK3R1, the regulatory subunit of phosphatidylinositol 3-kinase, and subsequent activation of the kinase AKT1. KITLG/SCF and KIT also transmit signals via GRB2 and activation of RAS, RAF1 and the MAP kinases MAPK1/ERK2 and/or MAPK3/ERK1. KITLG/SCF and KIT promote activation of STAT family members STAT1, STAT3 and STAT5. KITLG/SCF and KIT promote activation of PLCG1, leading to the production of the cellular signaling molecules diacylglycerol and inositol 1,4,5-trisphosphate. KITLG/SCF acts synergistically with other cytokines, probably interleukins. This Rattus norvegicus (Rat) protein is Kit ligand (Kitlg).